The following is a 754-amino-acid chain: ToMV susceptible protein tm-1(GCR26) (754 aa).

Positions 1 to 201 are N-terminal inhibitory domain NN; that stretch reads MATAQSNSPR…AGMVIGRLES (201 aa). ATP-binding positions include 18–20, Thr55, Arg92, and 124–127; these read DTK and GSGG. Residues 211–431 are N-terminal inhibitory domain NC; sequence KFTVGVTMFG…VDSFLEMSPK (221 aa).

Belongs to the UPF0261 family. As to quaternary structure, homodimer. In terms of assembly, (Microbial infection) Binds, via an ATP bridge, to the tobamoviruses avirulent (Avr) replication proteins (large and small subunits, e.g. tobacco mild green mosaic virus (TMGMV) AC P18339 and pepper mild mottle virus (PMMoV) AC P89657) to inhibit their function after the translation of tobamoviruses RNA, but before the viral replication complex formation on the membrane surfaces; this interaction is not possible with resistance-breaking strains replication proteins.

In terms of biological role, inhibitor of viral RNA replication which confers resistance to some tobamoviruses including tobacco mild green mosaic virus (TMGMV) and pepper mild mottle virus (PMMoV), but not to tomato mosaic virus (ToMV strains L, ToMV0 and ToMV1-2) and tobacco mosaic virus (TMV). Prevents tobamoviruses RNA replication by affecting the association of tobamoviruses replication proteins (large and small subunits) with host membrane-associated proteins (e.g. TOM1, TOM2A and ARL8), thus inhibiting the replication complex formation on the membranes and avoiding viral negative-strand RNA synthesis. The chain is ToMV susceptible protein tm-1(GCR26) from Solanum lycopersicum (Tomato).